The following is a 72-amino-acid chain: Translation initiation factor IF-1 (72 aa).

Residues 1-72 (MAKEEAIEVE…TRGRITYREK (72 aa)) enclose the S1-like domain.

This sequence belongs to the IF-1 family. As to quaternary structure, component of the 30S ribosomal translation pre-initiation complex which assembles on the 30S ribosome in the order IF-2 and IF-3, IF-1 and N-formylmethionyl-tRNA(fMet); mRNA recruitment can occur at any time during PIC assembly.

The protein resides in the cytoplasm. In terms of biological role, one of the essential components for the initiation of protein synthesis. Stabilizes the binding of IF-2 and IF-3 on the 30S subunit to which N-formylmethionyl-tRNA(fMet) subsequently binds. Helps modulate mRNA selection, yielding the 30S pre-initiation complex (PIC). Upon addition of the 50S ribosomal subunit IF-1, IF-2 and IF-3 are released leaving the mature 70S translation initiation complex. The protein is Translation initiation factor IF-1 of Syntrophotalea carbinolica (strain DSM 2380 / NBRC 103641 / GraBd1) (Pelobacter carbinolicus).